Consider the following 62-residue polypeptide: MQKLLIILILFCILKFNVDVEGRTAFPCNQSKCQERCKKEIKKGKCILQFISVSASQSCRCY.

Residues 1 to 22 (MQKLLIILILFCILKFNVDVEG) form the signal peptide. Cystine bridges form between Cys28-Cys46, Cys33-Cys59, and Cys37-Cys61.

The protein belongs to the short scorpion toxin superfamily. Potassium channel inhibitor family. Alpha-KTx 23 subfamily. Expressed by the venom gland.

The protein localises to the secreted. Functionally, may block potassium channels. This is U10-hottentoxin-Hj2a from Hottentotta judaicus (Black scorpion).